Reading from the N-terminus, the 261-residue chain is Cytochrome c oxidase subunit 3 (261 aa).

At 1 to 15 (MTHQTHAYHMVNPSP) the chain is on the mitochondrial matrix side. A helical transmembrane segment spans residues 16-34 (WPLTGALSALLLTSGLIMW). Topologically, residues 35–40 (FHFNSF) are mitochondrial intermembrane. The chain crosses the membrane as a helical span at residues 41–66 (LLVIIGLTCMLLTMYQWWRDIVREGT). Topologically, residues 67-72 (FQGHHT) are mitochondrial matrix. The helical transmembrane segment at 73–105 (PVVQKGLRYGMVLFIVSEVFFFLGFFWAFYHSS) threads the bilayer. The Mitochondrial intermembrane portion of the chain corresponds to 106-128 (LAPTPELGGCWPPTGIHPLNPLE). Residues 129 to 152 (VPLLNTSILLASGVSITWAHHSLM) traverse the membrane as a helical segment. The Mitochondrial matrix portion of the chain corresponds to 153 to 155 (EGN). A helical membrane pass occupies residues 156 to 183 (RKQMIQALSITILLGIYFTILQASEYYE). Topologically, residues 184–190 (SSFTISD) are mitochondrial intermembrane. Residues 191–223 (GVYGSTFFVATGFHGLHVIIGTTFLIVCLLRQF) form a helical membrane-spanning segment. The Mitochondrial matrix portion of the chain corresponds to 224 to 232 (NFHFTSTHH). Residues 233-256 (FGFEAAAWYWHFVDVVWLFLYVSI) form a helical membrane-spanning segment. Over 257–261 (YWWGS) the chain is Mitochondrial intermembrane.

Belongs to the cytochrome c oxidase subunit 3 family. Component of the cytochrome c oxidase (complex IV, CIV), a multisubunit enzyme composed of 14 subunits. The complex is composed of a catalytic core of 3 subunits MT-CO1, MT-CO2 and MT-CO3, encoded in the mitochondrial DNA, and 11 supernumerary subunits COX4I, COX5A, COX5B, COX6A, COX6B, COX6C, COX7A, COX7B, COX7C, COX8 and NDUFA4, which are encoded in the nuclear genome. The complex exists as a monomer or a dimer and forms supercomplexes (SCs) in the inner mitochondrial membrane with NADH-ubiquinone oxidoreductase (complex I, CI) and ubiquinol-cytochrome c oxidoreductase (cytochrome b-c1 complex, complex III, CIII), resulting in different assemblies (supercomplex SCI(1)III(2)IV(1) and megacomplex MCI(2)III(2)IV(2)).

The protein resides in the mitochondrion inner membrane. The catalysed reaction is 4 Fe(II)-[cytochrome c] + O2 + 8 H(+)(in) = 4 Fe(III)-[cytochrome c] + 2 H2O + 4 H(+)(out). Component of the cytochrome c oxidase, the last enzyme in the mitochondrial electron transport chain which drives oxidative phosphorylation. The respiratory chain contains 3 multisubunit complexes succinate dehydrogenase (complex II, CII), ubiquinol-cytochrome c oxidoreductase (cytochrome b-c1 complex, complex III, CIII) and cytochrome c oxidase (complex IV, CIV), that cooperate to transfer electrons derived from NADH and succinate to molecular oxygen, creating an electrochemical gradient over the inner membrane that drives transmembrane transport and the ATP synthase. Cytochrome c oxidase is the component of the respiratory chain that catalyzes the reduction of oxygen to water. Electrons originating from reduced cytochrome c in the intermembrane space (IMS) are transferred via the dinuclear copper A center (CU(A)) of subunit 2 and heme A of subunit 1 to the active site in subunit 1, a binuclear center (BNC) formed by heme A3 and copper B (CU(B)). The BNC reduces molecular oxygen to 2 water molecules using 4 electrons from cytochrome c in the IMS and 4 protons from the mitochondrial matrix. In Osphranter robustus (Wallaroo), this protein is Cytochrome c oxidase subunit 3 (MT-CO3).